Consider the following 527-residue polypeptide: Bifunctional purine biosynthesis protein PurH (527 aa).

Residues 1 to 149 enclose the MGS-like domain; that stretch reads MASDFLPVRR…KNFARVAVAA (149 aa).

Belongs to the PurH family.

It carries out the reaction (6R)-10-formyltetrahydrofolate + 5-amino-1-(5-phospho-beta-D-ribosyl)imidazole-4-carboxamide = 5-formamido-1-(5-phospho-D-ribosyl)imidazole-4-carboxamide + (6S)-5,6,7,8-tetrahydrofolate. It catalyses the reaction IMP + H2O = 5-formamido-1-(5-phospho-D-ribosyl)imidazole-4-carboxamide. It functions in the pathway purine metabolism; IMP biosynthesis via de novo pathway; 5-formamido-1-(5-phospho-D-ribosyl)imidazole-4-carboxamide from 5-amino-1-(5-phospho-D-ribosyl)imidazole-4-carboxamide (10-formyl THF route): step 1/1. Its pathway is purine metabolism; IMP biosynthesis via de novo pathway; IMP from 5-formamido-1-(5-phospho-D-ribosyl)imidazole-4-carboxamide: step 1/1. The protein is Bifunctional purine biosynthesis protein PurH of Xanthomonas axonopodis pv. citri (strain 306).